A 145-amino-acid chain; its full sequence is Galectin-5 (145 aa).

At Ser2 the chain carries N-acetylserine. In terms of domain architecture, Galectin spans 17–145; sequence FFTSIPNGLY…GDIQLTHVET (129 aa). Position 77 to 83 (77 to 83) interacts with a beta-D-galactoside; it reads WGPEERS.

Monomer. Erythrocytes.

Its function is as follows. May function in erythrocyte differentiation. The sequence is that of Galectin-5 (Lgals5) from Rattus norvegicus (Rat).